The sequence spans 328 residues: Tetraacyldisaccharide 4'-kinase (328 aa).

55-62 (TAGGNGKT) serves as a coordination point for ATP.

Belongs to the LpxK family.

It catalyses the reaction a lipid A disaccharide + ATP = a lipid IVA + ADP + H(+). Its pathway is glycolipid biosynthesis; lipid IV(A) biosynthesis; lipid IV(A) from (3R)-3-hydroxytetradecanoyl-[acyl-carrier-protein] and UDP-N-acetyl-alpha-D-glucosamine: step 6/6. Transfers the gamma-phosphate of ATP to the 4'-position of a tetraacyldisaccharide 1-phosphate intermediate (termed DS-1-P) to form tetraacyldisaccharide 1,4'-bis-phosphate (lipid IVA). The sequence is that of Tetraacyldisaccharide 4'-kinase from Escherichia coli O7:K1 (strain IAI39 / ExPEC).